The sequence spans 928 residues: DNA polymerase I (928 aa).

A 5'-3' exonuclease domain is found at 1-323; that stretch reads MVQIPQNPLI…ADEAPEVTAT (323 aa). In terms of domain architecture, 3'-5' exonuclease spans 324-517; it reads VISYDNYVTI…LHLKMWPDLQ (194 aa). The tract at residues 324–928 is klenow fragment; sequence VISYDNYVTI…GSGENWDQAH (605 aa). Positions 521 to 928 are polymerase; that stretch reads GPLNVFENIE…GSGENWDQAH (408 aa).

Belongs to the DNA polymerase type-A family. In terms of assembly, single-chain monomer with multiple functions.

It catalyses the reaction DNA(n) + a 2'-deoxyribonucleoside 5'-triphosphate = DNA(n+1) + diphosphate. Its function is as follows. In addition to polymerase activity, this DNA polymerase exhibits 3'-5' and 5'-3' exonuclease activity. It is able to utilize nicked circular duplex DNA as a template and can unwind the parental DNA strand from its template. In terms of biological role, genetic interactions among priB, dam, lexA, nagC, polA, rdgB, rdgB, rep and uup link the PriA-PriB replication restart pathway to DNA double-strand break repair. This chain is DNA polymerase I (polA), found in Escherichia coli (strain K12).